Reading from the N-terminus, the 296-residue chain is Phosphatidylglycerol--prolipoprotein diacylglyceryl transferase (296 aa).

The tract at residues M1 to L21 is disordered. Helical transmembrane passes span G34–I54, E72–T92, F108–I128, G136–R158, F195–W215, L227–E243, and L258–Q278. R158 contacts a 1,2-diacyl-sn-glycero-3-phospho-(1'-sn-glycerol).

Belongs to the Lgt family.

It is found in the cell membrane. It catalyses the reaction L-cysteinyl-[prolipoprotein] + a 1,2-diacyl-sn-glycero-3-phospho-(1'-sn-glycerol) = an S-1,2-diacyl-sn-glyceryl-L-cysteinyl-[prolipoprotein] + sn-glycerol 1-phosphate + H(+). The protein operates within protein modification; lipoprotein biosynthesis (diacylglyceryl transfer). Functionally, catalyzes the transfer of the diacylglyceryl group from phosphatidylglycerol to the sulfhydryl group of the N-terminal cysteine of a prolipoprotein, the first step in the formation of mature lipoproteins. The polypeptide is Phosphatidylglycerol--prolipoprotein diacylglyceryl transferase (Cutibacterium acnes (strain DSM 16379 / KPA171202) (Propionibacterium acnes)).